Consider the following 723-residue polypeptide: Polyribonucleotide nucleotidyltransferase (723 aa).

Residues Asp-488 and Asp-494 each coordinate Mg(2+). A KH domain is found at 555-614; it reads PKIITLNIKPEKIKDVIGPGGKQINAIIEETGVKIDIEQDGTVYIASQDQAMNRKAIAII. Residues 624-692 enclose the S1 motif domain; sequence GEVYTGKVRR…HQGRVNLSRK (69 aa). Residues 692–723 form a disordered region; the sequence is KALLEKKEQPEGDKKPQAEKKFYPKTKKPESK. Residues 693 to 723 show a composition bias toward basic and acidic residues; that stretch reads ALLEKKEQPEGDKKPQAEKKFYPKTKKPESK.

It belongs to the polyribonucleotide nucleotidyltransferase family. Mg(2+) serves as cofactor.

The protein resides in the cytoplasm. It catalyses the reaction RNA(n+1) + phosphate = RNA(n) + a ribonucleoside 5'-diphosphate. Its function is as follows. Involved in mRNA degradation. Catalyzes the phosphorolysis of single-stranded polyribonucleotides processively in the 3'- to 5'-direction. The polypeptide is Polyribonucleotide nucleotidyltransferase (Listeria innocua serovar 6a (strain ATCC BAA-680 / CLIP 11262)).